Reading from the N-terminus, the 337-residue chain is ERI1 exoribonuclease 3 (337 aa).

The 175-residue stretch at Phe146–Met320 folds into the Exonuclease domain. Mg(2+) contacts are provided by Asp150, Glu152, and Asp249. The Proton acceptor role is filled by Glu152. Glu152 lines the AMP pocket. The active-site Proton acceptor is His307. His307 contributes to the AMP binding site. Position 312 (Asp312) interacts with Mg(2+).

Interacts with PRNP. It depends on Mg(2+) as a cofactor. As to expression, highly expressed in the brain, heart, thyroid and testis. Expressed at low levels in the muscle cells, liver, pancreas and kidney.

This is ERI1 exoribonuclease 3 (Eri3) from Mus musculus (Mouse).